A 1129-amino-acid chain; its full sequence is MAPPGMRLRSGRSTGAPLTRGSCRKRNRSPERCDLGDDLHLQPRRKHVADSVDGRECGPHTLPIPGSPTVFTSGLPAFVSSPTLPVAPIPSPAPATPLPPPALLPPVTTSSSPIPPSHPVSPGTTDTHSPSPALPPTQSPESSQRPPLSSPTGRPDSSTPMRPPPSQQTTPPHSPTTPPPEPPSKSSPDSLAPSTLRSLRKRRLSSPQGPSTLNPICQSPPVSPPRCDFANRSVYPPWATESPIYVGSSSDGDTPPRQPPTSPISIGSSSPSEGSWGDDTAMLVLLAEIAEEASKNEKECSENNQAGEDNGDNEISKESQVDKDDNDNKDDEEEQETDEEDEEDDEEDDEEDDEEDDEEDDEEDDEEDDEEEDEEEDEEEDEEEDEEEEEDEEDDDDEDNEDEEDDEEEDKKEDEEDGGDGNKTLSIQSSQQQQEPQQQEPQQQEPQQQEPQQQEPQQQEPQQQEPQQQEPQQREPQQREPQQREPQQREPQQREPQQREPQQREPQQREPQQREPQQREPQQREPQQREPQQQEPQQQEPQQQEPQQQEPQQQEPQQQEPQQQEPQQQEPQQQEPQQQEPQQQEPQQQEPQQQDEQQQDEQQQDEQQQDEQQQDEQQQDEQQQDEQQQDEQEQQDEQQQDEQQQQDEQEQQEEQEQQEEQQQDEQQQDEQQQDEQQQDEQEQQDEQQQDEQQQQDEQEQQEEQEQQEEQEQQEEQEQQEEQEQELEEQEQELEEQEQELEEQEQELEEQEQELEEQEQELEEQEQELEEQEQELEEQEQELEEQEQELEEQEQELEEQEQELEEQEQELEEQEQELEEQEQEQELEEVEEQEQEQEEQELEEVEEQEQEQEEQEEQELEEVEEQEEQELEEVEEQEEQELEEVEEQEQQGVEQQEQETVEEPIILHGSSSEDEMEVDYPVVSTHEQIASSPPGDNTPDDDPQPGPSREYRYVLRTSPPHRPGVRMRRVPVTHPKKPHPRYQQPPVPYRQIDDCPAKARPQHIFYRRFLGKDGRRDPKCQWKFAVIFWGNDPYGLKKLSQAFQFGGVKAGPVSCLPHPGPDQSPITYCVYVYCQNKDTSKKVQMARLAWEASHPLAGNLQSSIVKFKKPLPLTQPGENQGPGDSPQEMT.

Disordered regions lie at residues 1–988 (MAPP…PVPY) and 1110–1129 (LPLT…QEMT). Basic and acidic residues-rich tracts occupy residues 28-41 (RSPE…DLHL) and 48-58 (VADSVDGRECG). Over residues 85–104 (PVAPIPSPAPATPLPPPALL) the composition is skewed to pro residues. Positions 139–156 (SPESSQRPPLSSPTGRPD) are enriched in polar residues. Pro residues predominate over residues 161–185 (MRPPPSQQTTPPHSPTTPPPEPPSK). A compositionally biased stretch (low complexity) spans 186–197 (SSPDSLAPSTLR). Over residues 207-217 (PQGPSTLNPIC) the composition is skewed to polar residues. Positions 263–275 (PISIGSSSPSEGS) are enriched in low complexity. Composition is skewed to basic and acidic residues over residues 292 to 301 (EASKNEKECS) and 314 to 323 (EISKESQVDK). Over residues 324-419 (DDNDNKDDEE…DKKEDEEDGG (96 aa)) the composition is skewed to acidic residues. Low complexity predominate over residues 431–471 (QQQQEPQQQEPQQQEPQQQEPQQQEPQQQEPQQQEPQQQEP). Positions 472-528 (QQREPQQREPQQREPQQREPQQREPQQREPQQREPQQREPQQREPQQREPQQREPQQ) are enriched in basic and acidic residues. The span at 529–596 (REPQQQEPQQ…QQQEPQQQDE (68 aa)) shows a compositional bias: low complexity. Residues 597–888 (QQQDEQQQDE…QELEEVEEQE (292 aa)) are compositionally biased toward acidic residues. Residues 924–934 (THEQIASSPPG) are compositionally biased toward polar residues. Residues 962–979 (PGVRMRRVPVTHPKKPHP) show a composition bias toward basic residues. The segment at 1008 to 1129 (FLGKDGRRDP…GPGDSPQEMT (122 aa)) is DNA-binding domain.

As to quaternary structure, homooligomer. Interacts with host BRD2. Interacts with host RELA, ELOB, ELOC and CUL5; these interactions induce the proteasomal degradation of host RELA. Interacts with host TRIM28 and NFE2L2/NRF2; these interactions are essential for the shutdown of lytic gene expression during the early stage of infection. Interacts (via N-terminus) with host histones H2A and H2B; these interactions are essential to dock LANA1 onto chromosomes. Interacts with host BUB1 and PCNA. Interacts with host NAP1L1; this interaction is required for LANA1-dependent DNA replication. Interacts with components of the host MLL1 complex KMT2A and WDR5.

The protein resides in the host nucleus. Multifunctional protein that plays a role in the replication and long-term persistence of the viral episomal genome in dividing cells. Binds to mitotic chromosomes via its N-terminal region and to a 16-bp imperfect palindrome within the origin of replication (oriP) located in the viral terminal repeat (TR) through its C-terminal. Tethers viral episomes to chromosomes during mitosis. Plays a critical role in the shutdown of lytic gene expression during the early stage of infection by interacting with host TRIM28. Also plays a role in the repression of host NF-kappa-B activity upon TNF-alpha stimulation by promoting the proteasomal degradation of host RELA. Promotes nuclear localization and cleavage of host STAT6 leading to constitutive activation of the IL13/STAT6 signaling pathway to promote viral latency. Interacts with and modulates the histone methyltransferase MLL1 complex activity, leading to its recruitment on viral DNA terminal repeats changing the dynamic of histone H3 methylated 'Lys-4'(H3K4me) profile during the initial hours following infection. The chain is Protein LANA1 (LANA1) from Homo sapiens (Human).